The primary structure comprises 257 residues: MVLIRVLANLLILQLSYAQKSSELVIGGDECNINEHPFLVLVYYDDYQCGGTLLNEEWVLTAAHCNGKDMEIYLGVHSKKVPNKDVQRRVPKEKFFCDSSKTYTKWNKDIMLIRLDRPVRKSAHIAPLSLPSSPPSVGSVCRIMGWGSITPVEVTFPDVPYCANINLLDDVECKPGYPELLPEYKTLCAGILEGGIDTCGFDSGAPLISNGQFQGIVSWGGDPCAQPREPGVYTNVFDHLDWIKGIIAGNTDVTCPP.

The signal sequence occupies residues M1–A18. Residues Q19–L24 constitute a propeptide that is removed on maturation. A Peptidase S1 domain is found at V25 to A248. 5 disulfide bridges follow: C31–C162, C49–C65, C97–C255, C173–C188, and C199–C224. Active-site charge relay system residues include H64 and D109. S203 serves as the catalytic Charge relay system.

It belongs to the peptidase S1 family. Snake venom subfamily. In terms of assembly, monomer. In terms of tissue distribution, expressed by the venom gland.

Its subcellular location is the secreted. Its function is as follows. Snake venom serine protease that may act in the hemostasis system of the prey. The chain is Snake venom serine protease Dav-KN from Deinagkistrodon acutus (Hundred-pace snake).